Here is a 425-residue protein sequence, read N- to C-terminus: Histone-binding protein RBBP4 (425 aa).

Position 2 is an N-acetylalanine (Ala2). WD repeat units lie at residues 32–125 (YDLV…NHEG), 126–175 (EVNR…RLRG), 176–223 (HQKE…KTIF), 225–270 (GHTA…HSVD), 271–314 (AHTA…HSFE), 315–371 (SHKD…FIHG), and 372–404 (GHTA…VWQM). Positions 361 to 406 (DGPPELLFIHGGHTAKISDFSWNPNEPWVICSVSEDNIMQVWQMAE) are interaction with HAT1.

It belongs to the WD repeat RBAP46/RBAP48/MSI1 family. In terms of assembly, binds directly to histone H4, probably via helix 1 of the histone fold, a region that is not accessible when histone H4 is in chromatin. Interacts with CHAF1A, HDAC1, HDAC2, HDAC3 and HIRA. May also interact with HAT1.

The protein localises to the nucleus. Its subcellular location is the chromosome. It is found in the telomere. In terms of biological role, core histone-binding subunit that may target chromatin assembly factors, chromatin remodeling factors and histone deacetylases to their histone substrates in a manner that is regulated by nucleosomal DNA. Component of several complexes which regulate chromatin metabolism. In Gallus gallus (Chicken), this protein is Histone-binding protein RBBP4 (RBBP4).